Consider the following 304-residue polypeptide: Ribonuclease Z (304 aa).

7 residues coordinate Zn(2+): histidine 61, histidine 63, aspartate 65, histidine 66, histidine 138, aspartate 206, and histidine 265. Aspartate 65 functions as the Proton acceptor in the catalytic mechanism.

This sequence belongs to the RNase Z family. In terms of assembly, homodimer. It depends on Zn(2+) as a cofactor.

It catalyses the reaction Endonucleolytic cleavage of RNA, removing extra 3' nucleotides from tRNA precursor, generating 3' termini of tRNAs. A 3'-hydroxy group is left at the tRNA terminus and a 5'-phosphoryl group is left at the trailer molecule.. In terms of biological role, zinc phosphodiesterase, which displays some tRNA 3'-processing endonuclease activity. Probably involved in tRNA maturation, by removing a 3'-trailer from precursor tRNA. The protein is Ribonuclease Z of Lachnospira eligens (strain ATCC 27750 / DSM 3376 / VPI C15-48 / C15-B4) (Eubacterium eligens).